Reading from the N-terminus, the 856-residue chain is Villin-like protein (856 aa).

Gelsolin-like repeat units lie at residues 22–74 (RKMV…EAQG), 146–186 (VSAT…SEKA), 263–307 (LVVL…QERK), 401–450 (LHRQ…DEIE), 521–561 (TRTM…DQRE), and 624–665 (LVLA…WKEA). Residues 762–796 (SQDSSENDLVRSPKSAGSRTSSSVSSTSATINGGL) are disordered. Positions 776 to 791 (SAGSRTSSSVSSTSAT) are enriched in low complexity. Positions 790–856 (ATINGGLRRE…RQEKKQLGFF (67 aa)) constitute an HP domain.

It belongs to the villin/gelsolin family. In terms of tissue distribution, ubiquitously expressed in 16 tissues examined.

Possible tumor suppressor. The sequence is that of Villin-like protein (VILL) from Homo sapiens (Human).